The chain runs to 217 residues: Adenylate kinase (217 aa).

10-15 provides a ligand contact to ATP; sequence GAGKGT. An NMP region spans residues 30 to 59; the sequence is STGDMFRAAMKEGTPLGLQAKEYIDRGDLV. AMP-binding positions include threonine 31, arginine 36, 57–59, 85–88, and glutamine 92; these read DLV and GFPR. The LID stretch occupies residues 126 to 163; the sequence is GRRICRNCGATYHLVFHPPAQPGVCDKCGGELYQRPDD. Arginine 127 is a binding site for ATP. The Zn(2+) site is built by cysteine 130 and cysteine 133. An ATP-binding site is contributed by 136–137; the sequence is TY. The Zn(2+) site is built by cysteine 150 and cysteine 153. Arginine 160 and arginine 171 together coordinate AMP. Glutamine 199 serves as a coordination point for ATP.

It belongs to the adenylate kinase family. As to quaternary structure, monomer.

The protein localises to the cytoplasm. The catalysed reaction is AMP + ATP = 2 ADP. It functions in the pathway purine metabolism; AMP biosynthesis via salvage pathway; AMP from ADP: step 1/1. Catalyzes the reversible transfer of the terminal phosphate group between ATP and AMP. Plays an important role in cellular energy homeostasis and in adenine nucleotide metabolism. The protein is Adenylate kinase of Geobacillus thermodenitrificans (strain NG80-2).